Here is a 288-residue protein sequence, read N- to C-terminus: Syntaxin-1A (288 aa).

A compositionally biased stretch (basic and acidic residues) spans 1-13; it reads MKDRTQELRTAKD. The disordered stretch occupies residues 1–20; the sequence is MKDRTQELRTAKDSDDDDDV. The Cytoplasmic segment spans residues 1–265; sequence MKDRTQELRT…KYQSKARRKK (265 aa). Phosphoserine is present on residues Ser14, Ser64, and Ser95. A coiled-coil region spans residues 68-109; the sequence is DEKTKEELEELMSDIKKTANKVRSKLKSIEQSIEQEEGLNRS. Ser188 carries the post-translational modification Phosphoserine; by DAPK1. Positions 192–254 constitute a t-SNARE coiled-coil homology domain; sequence LSEIETRHSE…ERAVSDTKKA (63 aa). Glycyl lysine isopeptide (Lys-Gly) (interchain with G-Cter in SUMO) cross-links involve residues Lys252, Lys253, and Lys256. Residues 266 to 286 form a helical; Anchor for type IV membrane protein membrane-spanning segment; sequence IMIIICCVILGIIIASTIGGI. Residues 287-288 lie on the Extracellular side of the membrane; sequence FG.

It belongs to the syntaxin family. As to quaternary structure, part of the SNARE core complex containing SNAP25, VAMP2 and STX1A; this complex constitutes the basic catalytic machinery of the complex neurotransmitter release apparatus. The SNARE complex interacts with CPLX1. Interacts with STXBP1. The interaction with STXBP1 promotes assembly of the SNARE complex. Interacts (via C-terminus) with KCNB1 (via C-terminus); the interaction increases in a calcium-dependent manner and induces a pore-independent enhancement of exocytosis in neuroendocrine cells, chromaffin cells, pancreatic beta cells and from the soma of dorsal root ganglia (DRG) neurons. Interacts with SYTL4. Interacts with STXBP6. Interacts with PLCL1 (via C2 domain). Interacts with OTOF. Interacts with LGI3. Interacts (via the H3 domain) with SLC6A4 (via the N-terminus); this interaction regulates SLC4A6 channel conductance in thalamocortical neurons. Interacts with SYT6 and SYT8; the interaction is Ca(2+)-dependent. Interacts with VAMP8. Interacts with SNAP23. Interacts with VAPA and SYBU. Interacts with PRRT2. Interacts with SEPT8. Interacts with STXBP5L. Interacts with synaptotagmin-1/SYT1. Interacts with SEPTIN5; in the cerebellar cortex. Interacts with SEPTIN4; in the striatum. Post-translationally, phosphorylated by CK2. Phosphorylation at Ser-188 by DAPK1 significantly decreases its interaction with STXBP1. Phosphorylated by CK2. Phosphorylation at Ser-188 by DAPK1 significantly decreases its interaction with STXBP1. In terms of processing, sumoylated, sumoylation is required for regulation of synaptic vesicle endocytosis. As to expression, expressed in the striatum (at protein level). Expressed in the ileum.

It localises to the cytoplasmic vesicle. The protein resides in the secretory vesicle. The protein localises to the synaptic vesicle membrane. It is found in the synapse. Its subcellular location is the synaptosome. It localises to the cell membrane. In terms of biological role, plays an essential role in hormone and neurotransmitter calcium-dependent exocytosis and endocytosis. Part of the SNARE (Soluble NSF Attachment Receptor) complex composed of SNAP25, STX1A and VAMP2 which mediates the fusion of synaptic vesicles with the presynaptic plasma membrane. STX1A and SNAP25 are localized on the plasma membrane while VAMP2 resides in synaptic vesicles. The pairing of the three SNAREs from the N-terminal SNARE motifs to the C-terminal anchors leads to the formation of the SNARE complex, which brings membranes into close proximity and results in final fusion. Participates in the calcium-dependent regulation of acrosomal exocytosis in sperm. Also plays an important role in the exocytosis of hormones such as insulin or glucagon-like peptide 1 (GLP-1). The chain is Syntaxin-1A (Stx1a) from Mus musculus (Mouse).